Here is a 357-residue protein sequence, read N- to C-terminus: DENN domain-containing protein 10 (357 aa).

A uDENN domain is found at 1 to 136 (MAAVVAMDTQ…IAVLTKGICQ (136 aa)). One can recognise a cDENN domain in the interval 152–299 (KAYLAGSIKD…PEKSDSQVIQ (148 aa)). In terms of domain architecture, dDENN spans 301–357 (IALKTKEIFTHLAPFSEVSDDGGKVILNVEALKQQRFPPATENFLYHLAAAEQMLKV).

Belongs to the DENND10 family. Interacts with the coiled-coil heterodimer of CCDC22 and CCDC93; the interaction is direct. Interacts with RAB27A and RAB27B (GDP-bound forms preferentially).

It is found in the late endosome. Guanine nucleotide exchange factor (GEF) regulating homeostasis of late endocytic pathway, including endosomal positioning, maturation and secretion, possibly through activating Rab proteins such as RAB27A and RAB27B. Promotes the exchange of GDP to GTP, converting inactive GDP-bound RAB27A and RAB27B into their active GTP-bound form. This chain is DENN domain-containing protein 10, found in Mus musculus (Mouse).